A 256-amino-acid polypeptide reads, in one-letter code: 5-oxoprolinase subunit A 2 (256 aa).

This sequence belongs to the LamB/PxpA family. Forms a complex composed of PxpA, PxpB and PxpC.

The catalysed reaction is 5-oxo-L-proline + ATP + 2 H2O = L-glutamate + ADP + phosphate + H(+). Its function is as follows. Catalyzes the cleavage of 5-oxoproline to form L-glutamate coupled to the hydrolysis of ATP to ADP and inorganic phosphate. In Bradyrhizobium diazoefficiens (strain JCM 10833 / BCRC 13528 / IAM 13628 / NBRC 14792 / USDA 110), this protein is 5-oxoprolinase subunit A 2.